Consider the following 806-residue polypeptide: MSVVSNHHSNGNGNSTVYDTNGNDEIKKEVKDEPMASDSEVPFGELMKRDKKEKKQKKRKAESGSDEDDYKPEKRKSSAKNGKKKDVGSDSEDDYKPEKKKSKKNNKKKAQESSEDDDEESEGDVSEEDVKPQIHSDDELEEEDEAPTTDDEEEQKRKEKERRKKEKREKKERKEKKRLEKENRKIKEEDDEDSDDEDDEKAKKKKRKSKGAEKSKPSTSKKDAGGKKEPPKKKVKKEEDIEDIWEWWKEEKKPAGVKWNSLQHCGPLFAPPYIPLPSHVHFKYGGEKMKLTLETEEIAQFYAGVLDHEYSTKEAFNKNFMKDWRKVMTVEERERIHDLKKCDFRAIDAYQKEQREIRKAMTKEEKLKIKEEKEAEVKIYGIAIIDGHRQKVANFRIEPPGVFRGRGGHPKMGLIKKRIMPEDVIINCGKDTEIPKPPPGHKWKEVRHDNTVTWLCSWTESVLGQNKYIMLNPSSKIKGEKDFEKYETARRLKKKIGGIRERYTDDFKSKEMRVRQRATALYFIDKLALRAGNEKDVDEAADTVGCCSLRVEHIKLFDSAKLNEDDKKEKEFVVEFDFLGKDSIRYFNRVSVEKRVYKNLKIFMEGKAPSDDLFDRLDTATLNDHLRSLMDGLTVKVFRTYNASITLQEQLIKLTNPKDNVAAKILSYNRANRQVAILCNHQRAVSKGFDESMQKLEQKIKDKKKEVKEAEAALKSARGAEKEKAQKKYDRLKEQLKKLKISRTDKDENKQIALGTSKLNYIDPRITVAWCKKFEVPLEKVFTKTHREKFRWAIDMTNSSDEEYVF.

Residues 1 to 15 (MSVVSNHHSNGNGNS) are compositionally biased toward low complexity. The segment at 1–236 (MSVVSNHHSN…KKEPPKKKVK (236 aa)) is disordered. The segment covering 24-34 (DEIKKEVKDEP) has biased composition (basic and acidic residues). Composition is skewed to basic residues over residues 49–60 (RDKKEKKQKKRK) and 98–108 (EKKKSKKNNKK). Residues 113 to 127 (SSEDDDEESEGDVSE) are compositionally biased toward acidic residues. Residues 128–137 (EDVKPQIHSD) are compositionally biased toward basic and acidic residues. Positions 138 to 153 (DELEEEDEAPTTDDEE) are enriched in acidic residues. Residues 159–176 (EKERRKKEKREKKERKEK) show a composition bias toward basic residues. A compositionally biased stretch (basic and acidic residues) spans 177 to 188 (KRLEKENRKIKE). The span at 189–199 (EDDEDSDDEDD) shows a compositional bias: acidic residues. The segment covering 210-229 (KGAEKSKPSTSKKDAGGKKE) has biased composition (basic and acidic residues). Interaction with DNA regions lie at residues 467-468 (KY), 530-535 (RAGNEK), and 634-636 (TVK). The region spanning 474–803 (SSKIKGEKDF…IDMTNSSDEE (330 aa)) is the Topo IB-type catalytic domain. Tyrosine 761 acts as the O-(3'-phospho-DNA)-tyrosine intermediate in catalysis.

Belongs to the type IB topoisomerase family. Expressed in male germ cells and in mature sperm.

It is found in the nucleus. It localises to the nucleolus. The protein resides in the chromosome. It carries out the reaction ATP-independent breakage of single-stranded DNA, followed by passage and rejoining.. Releases the supercoiling and torsional tension of DNA introduced during the DNA replication and transcription by transiently cleaving and rejoining one strand of the DNA duplex. Introduces a single-strand break via transesterification at a target site in duplex DNA. The scissile phosphodiester is attacked by the catalytic tyrosine of the enzyme, resulting in the formation of a DNA-(3'-phosphotyrosyl)-enzyme intermediate and the expulsion of a 5'-OH DNA strand. The free DNA strand then rotates around the intact phosphodiester bond on the opposing strand, thus removing DNA supercoils. Finally, in the religation step, the DNA 5'-OH attacks the covalent intermediate to expel the active-site tyrosine and restore the DNA phosphodiester backbone. Required for normal spermatogenesis and oogenesis. This chain is DNA topoisomerase 1 (top-1), found in Caenorhabditis elegans.